Consider the following 285-residue polypeptide: HTH-type transcriptional regulator MurR (285 aa).

The 77-residue stretch at 1–77 (MLYLTKISNA…MALIGEYSAS (77 aa)) folds into the HTH rpiR-type domain. A DNA-binding region (H-T-H motif) is located at residues 37 to 56 (SRQMAKQLGISQSSIVKFAQ). One can recognise an SIS domain in the interval 128 to 268 (IIDVISKAQF…FVGLVQLNDV (141 aa)).

Homotetramer.

It participates in amino-sugar metabolism; N-acetylmuramate degradation [regulation]. Its function is as follows. Represses the expression of the murPQ operon involved in the uptake and degradation of N-acetylmuramic acid (MurNAc). Binds to two adjacent inverted repeats within the operator region. MurNAc 6-phosphate, the substrate of MurQ, is the specific inducer that weakens binding of MurR to the operator. The polypeptide is HTH-type transcriptional regulator MurR (Escherichia coli (strain B / BL21-DE3)).